Reading from the N-terminus, the 194-residue chain is Probable GTP-binding protein EngB (194 aa).

An EngB-type G domain is found at 22–194; sequence DLPEYALAGR…AWQFIKEGME (173 aa). GTP-binding positions include 30–37, 57–61, 75–78, 142–145, and 174–176; these read GRSNVGKS, GKTQT, DVPG, TKAD, and FSS. Residues Ser37 and Thr59 each contribute to the Mg(2+) site.

This sequence belongs to the TRAFAC class TrmE-Era-EngA-EngB-Septin-like GTPase superfamily. EngB GTPase family. Mg(2+) serves as cofactor.

Its function is as follows. Necessary for normal cell division and for the maintenance of normal septation. The chain is Probable GTP-binding protein EngB from Listeria innocua serovar 6a (strain ATCC BAA-680 / CLIP 11262).